Consider the following 530-residue polypeptide: 2,3-bisphosphoglycerate-independent phosphoglycerate mutase (530 aa).

Mn(2+) contacts are provided by Asp15 and Ser65. The active-site Phosphoserine intermediate is Ser65. Substrate-binding positions include His126, 155–156, Arg187, Arg193, 257–260, and Lys330; these read RD and RPDR. Residues Asp397, His401, Asp438, His439, and His456 each contribute to the Mn(2+) site.

This sequence belongs to the BPG-independent phosphoglycerate mutase family. As to quaternary structure, monomer. Requires Mn(2+) as cofactor.

It catalyses the reaction (2R)-2-phosphoglycerate = (2R)-3-phosphoglycerate. It functions in the pathway carbohydrate degradation; glycolysis; pyruvate from D-glyceraldehyde 3-phosphate: step 3/5. Its function is as follows. Catalyzes the interconversion of 2-phosphoglycerate and 3-phosphoglycerate. The polypeptide is 2,3-bisphosphoglycerate-independent phosphoglycerate mutase (Synechococcus sp. (strain JA-3-3Ab) (Cyanobacteria bacterium Yellowstone A-Prime)).